A 920-amino-acid chain; its full sequence is Protein translocase subunit SecA (920 aa).

Residues glutamine 85, 103-107 (GEGKT), and aspartate 514 contribute to the ATP site. Zn(2+) contacts are provided by cysteine 904, cysteine 906, cysteine 915, and histidine 916.

This sequence belongs to the SecA family. Monomer and homodimer. Part of the essential Sec protein translocation apparatus which comprises SecA, SecYEG and auxiliary proteins SecDF-YajC and YidC. Zn(2+) serves as cofactor.

The protein localises to the cell inner membrane. The protein resides in the cytoplasm. It carries out the reaction ATP + H2O + cellular proteinSide 1 = ADP + phosphate + cellular proteinSide 2.. Part of the Sec protein translocase complex. Interacts with the SecYEG preprotein conducting channel. Has a central role in coupling the hydrolysis of ATP to the transfer of proteins into and across the cell membrane, serving both as a receptor for the preprotein-SecB complex and as an ATP-driven molecular motor driving the stepwise translocation of polypeptide chains across the membrane. The polypeptide is Protein translocase subunit SecA (Janthinobacterium sp. (strain Marseille) (Minibacterium massiliensis)).